Consider the following 354-residue polypeptide: S-adenosylmethionine:tRNA ribosyltransferase-isomerase (354 aa).

This sequence belongs to the QueA family. Monomer.

It localises to the cytoplasm. The enzyme catalyses 7-aminomethyl-7-carbaguanosine(34) in tRNA + S-adenosyl-L-methionine = epoxyqueuosine(34) in tRNA + adenine + L-methionine + 2 H(+). It functions in the pathway tRNA modification; tRNA-queuosine biosynthesis. Transfers and isomerizes the ribose moiety from AdoMet to the 7-aminomethyl group of 7-deazaguanine (preQ1-tRNA) to give epoxyqueuosine (oQ-tRNA). The polypeptide is S-adenosylmethionine:tRNA ribosyltransferase-isomerase (Salmonella schwarzengrund (strain CVM19633)).